The chain runs to 302 residues: Ribosomal RNA small subunit methyltransferase H (302 aa).

Residues 36 to 38 (GGH), Asp-56, Phe-84, Asp-99, and Gln-106 contribute to the S-adenosyl-L-methionine site.

It belongs to the methyltransferase superfamily. RsmH family.

The protein localises to the cytoplasm. It catalyses the reaction cytidine(1402) in 16S rRNA + S-adenosyl-L-methionine = N(4)-methylcytidine(1402) in 16S rRNA + S-adenosyl-L-homocysteine + H(+). Specifically methylates the N4 position of cytidine in position 1402 (C1402) of 16S rRNA. The chain is Ribosomal RNA small subunit methyltransferase H from Christiangramia forsetii (strain DSM 17595 / CGMCC 1.15422 / KT0803) (Gramella forsetii).